Here is a 122-residue protein sequence, read N- to C-terminus: WUSCHEL-related homeobox 7 (122 aa).

Positions 25–89 form a DNA-binding region, homeobox; WUS-type; the sequence is AKCGRWNPTV…NHKARERQKC (65 aa). Over residues 98 to 111 the composition is skewed to basic and acidic residues; that stretch reads DHRQDTDLSKPRRD. Positions 98–122 are disordered; sequence DHRQDTDLSKPRRDNVRRHQLPAKG. Basic residues predominate over residues 112 to 122; the sequence is NVRRHQLPAKG.

It belongs to the WUS homeobox family.

It localises to the nucleus. Its function is as follows. Potential transcription factor that plays a central role during developmental processes. The chain is WUSCHEL-related homeobox 7 (WOX7) from Arabidopsis thaliana (Mouse-ear cress).